The chain runs to 200 residues: MQLAELVAACRWIGAKGWSPATGGNMSQRRDVHSCYITESGLDKGHLDAGDFLTVDIQTGAAQPGRRPSAETGLHTFLYRRFPEVGCVLHTHSVSATVLSRAEQGSTLRLSGYEMQKSLTGQTDHREEVAIAVFDNSQDIPALVQRIALQDALTPLRYGFLMCGHGLTCWGRDVREARLHLEGLEFLFECEWRRRLLEAQ.

Zn(2+) contacts are provided by His90 and His92.

This sequence belongs to the aldolase class II family. MtnB subfamily. The cofactor is Zn(2+).

It carries out the reaction 5-(methylsulfanyl)-D-ribulose 1-phosphate = 5-methylsulfanyl-2,3-dioxopentyl phosphate + H2O. The protein operates within amino-acid biosynthesis; L-methionine biosynthesis via salvage pathway; L-methionine from S-methyl-5-thio-alpha-D-ribose 1-phosphate: step 2/6. Its function is as follows. Catalyzes the dehydration of methylthioribulose-1-phosphate (MTRu-1-P) into 2,3-diketo-5-methylthiopentyl-1-phosphate (DK-MTP-1-P). This is Methylthioribulose-1-phosphate dehydratase from Sodalis glossinidius (strain morsitans).